The sequence spans 285 residues: 2-methoxy-6-polyprenyl-1,4-benzoquinol methylase, mitochondrial (285 aa).

Residues 1-30 (MKGATNLFKSMRKPTNVGNFRQFSVNQVNS) constitute a mitochondrion transit peptide. S-adenosyl-L-methionine is bound by residues Thr-106, Asp-126, 156-157 (NA), and Ser-173.

It belongs to the class I-like SAM-binding methyltransferase superfamily. MenG/UbiE family. Component of a multi-subunit COQ enzyme complex.

It is found in the mitochondrion inner membrane. It catalyses the reaction a 2-methoxy-6-(all-trans-polyprenyl)benzene-1,4-diol + S-adenosyl-L-methionine = a 5-methoxy-2-methyl-3-(all-trans-polyprenyl)benzene-1,4-diol + S-adenosyl-L-homocysteine + H(+). Its pathway is cofactor biosynthesis; ubiquinone biosynthesis. In terms of biological role, methyltransferase required for the conversion of 2-polyprenyl-6-methoxy-1,4-benzoquinol (DDMQH2) to 2-polyprenyl-3-methyl-6-methoxy-1,4-benzoquinol (DMQH2). This chain is 2-methoxy-6-polyprenyl-1,4-benzoquinol methylase, mitochondrial, found in Caenorhabditis elegans.